The sequence spans 625 residues: Mesothelin (625 aa).

An N-terminal signal peptide occupies residues 1-35 (MALPTARPLLGSCGSPICSRSFLLLLLSLGWIPRL). Residue N93 is glycosylated (N-linked (GlcNAc...) asparagine). Phosphoserine is present on S202. C304 and C328 are joined by a disulfide. N390, N488, and N517 each carry an N-linked (GlcNAc...) asparagine glycan. S600 carries the GPI-anchor amidated serine lipid modification. The propeptide at 601–625 (SRASLLGPGFVLIWIPALLPALRLS) is removed in mature form.

The protein belongs to the mesothelin family. Interacts with MUC16. In terms of processing, proteolytically cleaved by a furin-like convertase to generate megakaryocyte-potentiating factor (MPF), and the cleaved form of mesothelin. In terms of tissue distribution, highly expressed in lung and heart. Expressed at low levels in spleen, liver, kidney and testis. Present in lung (at protein level).

Its subcellular location is the cell membrane. It localises to the golgi apparatus. The protein localises to the secreted. Functionally, membrane-anchored forms may play a role in cellular adhesion. Its function is as follows. Megakaryocyte-potentiating factor (MPF) may potentiate megakaryocyte colony formation. This chain is Mesothelin (Msln), found in Mus musculus (Mouse).